The chain runs to 171 residues: Adenine phosphoribosyltransferase (171 aa).

The protein belongs to the purine/pyrimidine phosphoribosyltransferase family. As to quaternary structure, homodimer.

Its subcellular location is the cytoplasm. The enzyme catalyses AMP + diphosphate = 5-phospho-alpha-D-ribose 1-diphosphate + adenine. It participates in purine metabolism; AMP biosynthesis via salvage pathway; AMP from adenine: step 1/1. Its function is as follows. Catalyzes a salvage reaction resulting in the formation of AMP, that is energically less costly than de novo synthesis. This chain is Adenine phosphoribosyltransferase, found in Rhodospirillum centenum (strain ATCC 51521 / SW).